The sequence spans 294 residues: ATP phosphoribosyltransferase (294 aa).

This sequence belongs to the ATP phosphoribosyltransferase family. Long subfamily. Mg(2+) is required as a cofactor.

It is found in the cytoplasm. It catalyses the reaction 1-(5-phospho-beta-D-ribosyl)-ATP + diphosphate = 5-phospho-alpha-D-ribose 1-diphosphate + ATP. It functions in the pathway amino-acid biosynthesis; L-histidine biosynthesis; L-histidine from 5-phospho-alpha-D-ribose 1-diphosphate: step 1/9. Feedback inhibited by histidine. Functionally, catalyzes the condensation of ATP and 5-phosphoribose 1-diphosphate to form N'-(5'-phosphoribosyl)-ATP (PR-ATP). Has a crucial role in the pathway because the rate of histidine biosynthesis seems to be controlled primarily by regulation of HisG enzymatic activity. The polypeptide is ATP phosphoribosyltransferase (Prosthecochloris aestuarii (strain DSM 271 / SK 413)).